The following is a 639-amino-acid chain: Centromere protein T (639 aa).

Disordered stretches follow at residues 1 to 64 (MDGR…RPNA), 266 to 294 (QLSD…GLVS), 307 to 451 (SEKD…ERGT), 458 to 477 (AAEE…ESEE), and 494 to 534 (QPVL…TREP). Low complexity predominate over residues 12 to 23 (RAAPTPRVAVRS). The interval 80 to 500 (IIQNQPQVSP…YRPQPVLSPP (421 aa)) is flexible stalk domain. Over residues 267–281 (LSDSKTSAQRSNTSY) the composition is skewed to polar residues. Basic and acidic residues-rich tracts occupy residues 307-319 (SEKD…EHVD), 329-338 (QGEEEQDHSQ), 356-371 (TEHH…SEKK), and 432-449 (PGAK…EIER). The span at 458 to 469 (AAEEEATDDESD) shows a compositional bias: acidic residues.

This sequence belongs to the CENP-T/CNN1 family. Component of the CENPA-CAD complex, composed of CENPI, CENPK, CENPL, CENPO, CENPP, CENPQ, CENPR and CENPS. The CENPA-CAD complex is probably recruited on centromeres by the CENPA-NAC complex, at least composed of CENPA, CENPC, CENPH, CENPM, CENPN, CENPT and CENPU. Identified in a centromeric complex containing histones H2A, H2B, H3 and H4, and at least CENPA, CENPB, CENPC, CENPT, CENPN, HJURP, SUPT16H, SSRP1 and RSF1. Interacts (via N-terminus) with the NDC80 complex. Heterodimer with CENPW; this dimer coassembles with CENPS-CENPX heterodimers at centromeres to form the tetrameric CENP-T-W-S-X complex.

The protein resides in the nucleus. It is found in the chromosome. Its subcellular location is the centromere. It localises to the kinetochore. In terms of biological role, component of the CENPA-NAC (nucleosome-associated) complex, a complex that plays a central role in assembly of kinetochore proteins, mitotic progression and chromosome segregation. The CENPA-NAC complex recruits the CENPA-CAD (nucleosome distal) complex and may be involved in incorporation of newly synthesized CENPA into centromeres. Part of a nucleosome-associated complex that binds specifically to histone H3-containing nucleosomes at the centromere, as opposed to nucleosomes containing CENPA. Component of the heterotetrameric CENP-T-W-S-X complex that binds and supercoils DNA, and plays an important role in kinetochore assembly. CENPT has a fundamental role in kinetochore assembly and function. It is one of the inner kinetochore proteins, with most further proteins binding downstream. Required for normal chromosome organization and normal progress through mitosis. The chain is Centromere protein T (CENPT) from Gallus gallus (Chicken).